Consider the following 282-residue polypeptide: 4-hydroxy-tetrahydrodipicolinate reductase (282 aa).

NAD(+) contacts are provided by residues 14–19 (GAMGRM) and 115–117 (GTT). Catalysis depends on His-171, which acts as the Proton donor/acceptor. A (S)-2,3,4,5-tetrahydrodipicolinate-binding site is contributed by His-172. Residue Lys-175 is the Proton donor of the active site. Residue 181–182 (GT) participates in (S)-2,3,4,5-tetrahydrodipicolinate binding.

Belongs to the DapB family.

The protein localises to the cytoplasm. The enzyme catalyses (S)-2,3,4,5-tetrahydrodipicolinate + NAD(+) + H2O = (2S,4S)-4-hydroxy-2,3,4,5-tetrahydrodipicolinate + NADH + H(+). It carries out the reaction (S)-2,3,4,5-tetrahydrodipicolinate + NADP(+) + H2O = (2S,4S)-4-hydroxy-2,3,4,5-tetrahydrodipicolinate + NADPH + H(+). It participates in amino-acid biosynthesis; L-lysine biosynthesis via DAP pathway; (S)-tetrahydrodipicolinate from L-aspartate: step 4/4. Catalyzes the conversion of 4-hydroxy-tetrahydrodipicolinate (HTPA) to tetrahydrodipicolinate. This chain is 4-hydroxy-tetrahydrodipicolinate reductase, found in Prochlorococcus marinus (strain NATL2A).